The sequence spans 353 residues: MKSRGLSVSTTNEHPDSQRLLADPLAGSESWWQQIAQWGTPLVEPISEDKVRLTFLWREPVAGADEPTYSRVYIDVNGVTDHHSTHPETLQRLGQTHVWYWQAEVESDFRGSYSFMPVTAEHCLNLPEGTPQERRQAQRNWWISLMDLAQNDPFNHTAPHSSYRGRPLSAVHLADAIPQTAWQPIDAGQQLPTDTQRLQLITWHSELLGNSRNVWIYHTHGTEDNAERPLAILLDGQYWATRQPIFGVLDNETDAGRLPASVYVLIDIIDQPHRSVELPCNQDFWQALQTELLPQVAALQPFTDQASRTVVAGQSFGWVGLAICRITLAAAFWWCAESSPVPSGGRMLIISKL.

The protein belongs to the Fes family.

It localises to the cytoplasm. It carries out the reaction Fe(III)-enterobactin + 3 H2O + H(+) = Fe(III)-[N-(2,3-dihydroxybenzoyl)-L-serine] + 2 N-(2,3-dihydroxybenzoyl)-L-serine. The catalysed reaction is Fe(III)-enterobactin + H2O = Fe(III)-[N-(2,3-dihydroxybenzoyl)-L-serine]3 + H(+). The enzyme catalyses Fe(III)-[N-(2,3-dihydroxybenzoyl)-L-serine]3 + H2O + H(+) = Fe(III)-[N-(2,3-dihydroxybenzoyl)-L-serine]2 + N-(2,3-dihydroxybenzoyl)-L-serine. It catalyses the reaction Fe(III)-[N-(2,3-dihydroxybenzoyl)-L-serine]2 + H2O + H(+) = Fe(III)-[N-(2,3-dihydroxybenzoyl)-L-serine] + N-(2,3-dihydroxybenzoyl)-L-serine. In terms of biological role, catalyzes the hydrolysis of ferric enterobactin (Fe-Ent). Is responsible for the release of iron from ferric enterobactin. The chain is Iron(III) enterobactin esterase from Yersinia enterocolitica.